The chain runs to 714 residues: Choline transporter-like protein 5 (714 aa).

Residues 1–33 (MGRRSAAPTSPFGEPRKFDPKFKGPIGKRHCTD) lie on the Cytoplasmic side of the membrane. Residues 34–54 (VLCCIIFVVVILGYIALGVVA) form a helical membrane-spanning segment. Residues 55-237 (WIHGDPRKII…KIFEDYASSW (183 aa)) are Extracellular-facing. N83, N132, N192, and N205 each carry an N-linked (GlcNAc...) asparagine glycan. The helical transmembrane segment at 238–258 (YWILIALFIAMVVSLLFLILL) threads the bilayer. Topologically, residues 259-261 (RFT) are cytoplasmic. Residues 262 to 282 (AGVFFWIFIIGVIGVVGYGIW) form a helical membrane-spanning segment. At 283-320 (HCFWEYDSLKGVPGADLTIYDIGLQTDFRVYLQLRQTW) the chain is on the extracellular side. The helical transmembrane segment at 321–341 (LAFMILLCIVEVIIILMLIFL) threads the bilayer. Residues 342–346 (RNRIR) lie on the Cytoplasmic side of the membrane. Residues 347–367 (IAIALLQEGSRAIGYIMSTLF) form a helical membrane-spanning segment. Residues 368–369 (YP) lie on the Extracellular side of the membrane. A helical transmembrane segment spans residues 370–390 (IITFILIAICISYWAVTAVFM). The Cytoplasmic segment spans residues 391–455 (ATSGEPIYKV…QYILIFQLCN (65 aa)). A helical membrane pass occupies residues 456–476 (VFVFLWLVNFSIALGQCTLAG). Residues 477-510 (AFASYYWAFKKPADIPACPLFSSFGRAIRYHTGS) are Extracellular-facing. The helical transmembrane segment at 511-531 (LALGSLILALVQFIRIILEYL) threads the bilayer. Residues 532–605 (DHKLKASQNS…RVAVLDKVTD (74 aa)) are Cytoplasmic-facing. The helical transmembrane segment at 606 to 626 (FLLFLGKVFVTGSVGVLAFFF) threads the bilayer. Residues 627–644 (FTRKIPVLTDEAPALNYY) lie on the Extracellular side of the membrane. A helical transmembrane segment spans residues 645 to 665 (WVPLLTVLIGSYLIAHGFFSV). Residues 666-711 (YAMCVDTLFLCFCEDLERNNGSSSKPYYMSPNLHRILGKKEILSKK) are Cytoplasmic-facing.

The protein belongs to the CTL (choline transporter-like) family.

The protein resides in the cell membrane. The enzyme catalyses choline(out) + n H(+)(in) = choline(in) + n H(+)(out). Functionally, choline/H+ antiporter. This is Choline transporter-like protein 5 (slc44a5) from Xenopus tropicalis (Western clawed frog).